We begin with the raw amino-acid sequence, 128 residues long: Ribonuclease P protein component (128 aa).

It belongs to the RnpA family. In terms of assembly, consists of a catalytic RNA component (M1 or rnpB) and a protein subunit.

The enzyme catalyses Endonucleolytic cleavage of RNA, removing 5'-extranucleotides from tRNA precursor.. Its function is as follows. RNaseP catalyzes the removal of the 5'-leader sequence from pre-tRNA to produce the mature 5'-terminus. It can also cleave other RNA substrates such as 4.5S RNA. The protein component plays an auxiliary but essential role in vivo by binding to the 5'-leader sequence and broadening the substrate specificity of the ribozyme. The polypeptide is Ribonuclease P protein component (Prochlorococcus marinus (strain MIT 9313)).